We begin with the raw amino-acid sequence, 458 residues long: (R)-6-hydroxynicotine oxidase (458 aa).

An FAD-binding PCMH-type domain is found at 33-204 (RHLQRPSLIA…TEVEVQLYEL (172 aa)). Residues 67–73 (RSGGHNP), 129–130 (HP), 134–137 (FCGL), glycine 144, threonine 195, asparagine 413, and asparagine 450 contribute to the FAD site. Histidine 71 carries the pros-8alpha-FAD histidine modification.

Belongs to the oxygen-dependent FAD-linked oxidoreductase family. As to quaternary structure, monomer. The cofactor is FAD.

Its subcellular location is the cytoplasm. The catalysed reaction is (R)-6-hydroxynicotine + O2 + H2O = 6-hydroxypseudooxynicotine + H2O2. The enzyme catalyses (R)-6-hydroxynicotine + O2 = 6-hydroxy-N-methylmyosmine + H2O2. It functions in the pathway alkaloid degradation; nicotine degradation; 6-hydroxypseudooxynicotine from nicotine (R-isomer route): step 2/2. Inhibited by (S)-6-hydroxynicotine. Inhibited by high concentrations of phenanthroline. Functionally, involved in the degradation of D-nicotine. Catalyzes the oxidation of (R)-6-hydroxynicotine (6-hydroxy-D-nicotine) to 6-hydroxypseudooxynicotine. Oxidation of the pyrrolidine ring of (R)-6-hydroxynicotine leads to the formation of the optically inactive 6-hydroxy-N-methylmyosmine, which hydrolyzes spontaneously to 6-hydroxypseudooxynicotine. Acts with absolute stereospecificity on the D-form of 6-hydroxynicotine. Shows lower activity with (R)-6-hydroxynornicotine, and weak activity with (R)-4-(1-methylpyrrolidine-2-yl)phenol, (R)-6-chloronicotine and (R)-nicotine. In Paenarthrobacter nicotinovorans (Arthrobacter nicotinovorans), this protein is (R)-6-hydroxynicotine oxidase.